The sequence spans 103 residues: Acylphosphatase-2 (103 aa).

Ser2 is subject to N-acetylserine. Residues Ser13–Tyr103 form the Acylphosphatase-like domain. Active-site residues include Arg28 and Asn46.

Belongs to the acylphosphatase family.

The enzyme catalyses an acyl phosphate + H2O = a carboxylate + phosphate + H(+). Its physiological role is not yet clear. This Anas platyrhynchos (Mallard) protein is Acylphosphatase-2 (ACYP2).